Here is a 427-residue protein sequence, read N- to C-terminus: Kallistatin (427 aa).

The N-terminal stretch at 1 to 20 (MHLIDYLLLLLVGLLALSHG) is a signal peptide. N-linked (GlcNAc...) asparagine glycosylation is found at Asn-33, Asn-108, and Asn-157. N-linked (GlcNAc...) (complex) asparagine glycosylation occurs at Asn-238.

The protein belongs to the serpin family. Monomer and some homodimers. The N-terminus is blocked. Expressed by the liver and secreted in plasma.

Its subcellular location is the secreted. Inhibits human amidolytic and kininogenase activities of tissue kallikrein. Inhibition is achieved by formation of an equimolar, heat- and SDS-stable complex between the inhibitor and the enzyme, and generation of a small C-terminal fragment of the inhibitor due to cleavage at the reactive site by tissue kallikrein. The sequence is that of Kallistatin (SERPINA4) from Homo sapiens (Human).